A 68-amino-acid chain; its full sequence is Beta-defensin 1 (68 aa).

The signal sequence occupies residues 1–21 (MRTSYLLLFTLCLLLSEMASG). The propeptide occupies 22–32 (GNFLTGLGHRS). 3 disulfides stabilise this stretch: cysteine 37–cysteine 66, cysteine 44–cysteine 59, and cysteine 49–cysteine 67.

Belongs to the beta-defensin family. Monomer. Homodimer.

Its subcellular location is the secreted. The protein localises to the membrane. Functionally, has bactericidal activity. May act as a ligand for C-C chemokine receptor CCR6. Positively regulates the sperm motility and bactericidal activity in a CCR6-dependent manner. Binds to CCR6 and triggers Ca2+ mobilization in the sperm which is important for its motility. This Pan troglodytes (Chimpanzee) protein is Beta-defensin 1 (DEFB1).